The following is a 572-amino-acid chain: Oxygen-dependent choline dehydrogenase (572 aa).

Residue 9–38 coordinates FAD; it reads DYVIIGGGSAGSVLGARLSEDKDKNVLVLE. H477 serves as the catalytic Proton acceptor.

This sequence belongs to the GMC oxidoreductase family. FAD serves as cofactor.

The catalysed reaction is choline + A = betaine aldehyde + AH2. The enzyme catalyses betaine aldehyde + NAD(+) + H2O = glycine betaine + NADH + 2 H(+). It functions in the pathway amine and polyamine biosynthesis; betaine biosynthesis via choline pathway; betaine aldehyde from choline (cytochrome c reductase route): step 1/1. Involved in the biosynthesis of the osmoprotectant glycine betaine. Catalyzes the oxidation of choline to betaine aldehyde and betaine aldehyde to glycine betaine at the same rate. The polypeptide is Oxygen-dependent choline dehydrogenase (Staphylococcus epidermidis (strain ATCC 12228 / FDA PCI 1200)).